Consider the following 5405-residue polypeptide: IgGFc-binding protein (5405 aa).

A signal peptide spans 1 to 23 (MGALWSWWILWAGATLLWGLTQE). Positions 24 to 450 (ASVDLKNTGR…EPSCEGMQCA (427 aa)) are igGFc-binding. 2 N-linked (GlcNAc...) asparagine glycosylation sites follow: asparagine 75 and asparagine 91. In terms of domain architecture, VWFD 1 spans 470-650 (AVCRAQGDPH…KLDDGDYLCE (181 aa)). Intrachain disulfides connect cysteine 472/cysteine 611 and cysteine 494/cysteine 649. The TIL 1 domain occupies 745–799 (CPANSRYELCGPACPTSCNGAAAPSNCSGRPCVEGCVCLPGFVASGGACVPASSC). Positions 862-1041 (GTCQGSGDPH…WQEETRPGCG (180 aa)) constitute a VWFD 2 domain. 2 disulfides stabilise this stretch: cysteine 864-cysteine 1003 and cysteine 886-cysteine 1040. One can recognise a TIL 2 domain in the interval 1136-1189 (CPPHSHYEACSYGCPLSCGDLPVPGGCGSECHEGCVCDEGFALSGESCLPLASC). In terms of domain architecture, VWFD 3 spans 1250–1429 (STCQASGDPH…EEVVPDSPCL (180 aa)). Cystine bridges form between cysteine 1252/cysteine 1390 and cysteine 1274/cysteine 1428. The N-linked (GlcNAc...) (complex) asparagine glycan is linked to asparagine 1317. In terms of domain architecture, TIL 3 spans 1532–1585 (CPPNSHYELCADTCSLGCSALSAPPQCQDGCAEGCQCDSGFLYNGQACVPIQQC). The 184-residue stretch at 1671–1854 (ATCWLWGDPH…RAPGWDPLCW (184 aa)) folds into the VWFD 4 domain. Cystine bridges form between cysteine 1673–cysteine 1815, cysteine 1695–cysteine 1853, and cysteine 1704–cysteine 1812. The N-linked (GlcNAc...) asparagine glycan is linked to asparagine 1743. In terms of domain architecture, TIL 4 spans 1950–2007 (CPENSHYEVCGSPCPASCPSPAPLTTPAVCEGPCVEGCQCDAGFVLSADRCVPLNNGC). One can recognise a VWFD 5 domain in the interval 2070-2253 (AECQAWGDPH…VSKPCPSPCT (184 aa)). 2 disulfide bridges follow: cysteine 2072/cysteine 2211 and cysteine 2094/cysteine 2252. N-linked (GlcNAc...) asparagine glycosylation occurs at asparagine 2138. Positions 2337 to 2390 (CPAHSHYELCGDSCPGSCPSLSAPEGCESACREGCVCDAGFVLSGDTCVPVGQC) constitute a TIL 5 domain. One can recognise a VWFD 6 domain in the interval 2451–2630 (TTCQASGDPH…EEVVPDSPCL (180 aa)). 2 cysteine pairs are disulfide-bonded: cysteine 2453-cysteine 2591 and cysteine 2475-cysteine 2629. A glycan (N-linked (GlcNAc...) asparagine) is linked at asparagine 2518. In terms of domain architecture, TIL 6 spans 2733 to 2786 (CPQNSHYELCADTCSLGCSALSAPLQCPDGCAEGCQCDSGFLYNGQACVPIQQC). In terms of domain architecture, VWFD 7 spans 2872–3055 (ATCWLWGDPH…RAPGWDPLCW (184 aa)). Cystine bridges form between cysteine 2874–cysteine 3016, cysteine 2896–cysteine 3054, and cysteine 2905–cysteine 3013. Residues 3151–3208 (CPENSHYEVCGPPCPASCPSPAPLTTPAVCEGPCVEGCQCDAGFVLSADRCVPLNNGC) enclose the TIL 7 domain. One can recognise a VWFD 8 domain in the interval 3271–3454 (AECQAWGDPH…VSKPCPSPCT (184 aa)). 2 disulfide bridges follow: cysteine 3273–cysteine 3412 and cysteine 3295–cysteine 3453. A TIL 8 domain is found at 3538-3591 (CPAHSHYELCGDSCPGSCPSLSAPEGCESACREGCVCDAGFVLSGDTCVPVGQC). A VWFD 9 domain is found at 3652–3831 (TTCQASGDPH…EEVVPDSPCL (180 aa)). Cystine bridges form between cysteine 3654/cysteine 3792 and cysteine 3676/cysteine 3830. Asparagine 3719 is a glycosylation site (N-linked (GlcNAc...) asparagine). The region spanning 3934–3987 (CPQNSHYELCADTCSLGCSALSAPLQCPDGCAEGCQCDSGFLYNGQACVPIQQC) is the TIL 9 domain. The VWFD 10 domain occupies 4073-4256 (ATCWLWGDPH…RAPGWDPLCW (184 aa)). Cystine bridges form between cysteine 4075–cysteine 4217, cysteine 4097–cysteine 4255, and cysteine 4106–cysteine 4214. A glycan (N-linked (GlcNAc...) asparagine) is linked at asparagine 4145. In terms of domain architecture, TIL 10 spans 4352–4409 (CPENSHYEVCGPPCPASCPSPAPLTTPAVCEGPCVEGCQCDAGFVLSADRCVPLNNGC). The region spanning 4472–4655 (AECQAWGDPH…VSKPCPSPCT (184 aa)) is the VWFD 11 domain. 2 disulfides stabilise this stretch: cysteine 4474–cysteine 4613 and cysteine 4496–cysteine 4654. Asparagine 4540 carries N-linked (GlcNAc...) asparagine glycosylation. The TIL 11 domain occupies 4739 to 4792 (CPAHSHYELCGDSCPVSCPSLSAPEGCESACREGCVCDAGFVLSGDTCVPVGQC). The VWFD 12 domain maps to 4854 to 5025 (GRCLANGGIH…RAPGSSKGCG (172 aa)). 2 disulfides stabilise this stretch: cysteine 4856–cysteine 4986 and cysteine 4878–cysteine 5024. The 54-residue stretch at 5121–5174 (CPAHSHYSICTRTCQGSCAALSGLTGCTTRCFEGCECDDRFLLSQGVCIPVQDC) folds into the TIL 12 domain. Residues 5233–5404 (GLCVLSVGAN…WRAQDFSPCY (172 aa)) enclose the VWFD 13 domain. Cysteine 5235 and cysteine 5372 form a disulfide bridge.

Interacts with the Fc portion of IgG and with MUC2. In terms of tissue distribution, mainly expressed in placenta and colon epithelium. Expressed in thyroid, and down-regulated in thyroid carcinomas. Present in serum, with higher levels in patients with various autoimmune diseases (at protein level).

It localises to the secreted. Its function is as follows. May be involved in the maintenance of the mucosal structure as a gel-like component of the mucosa. The protein is IgGFc-binding protein (FCGBP) of Homo sapiens (Human).